The primary structure comprises 282 residues: Phosphatidylserine decarboxylase proenzyme (282 aa).

Residues Asp-85, His-142, and Ser-244 each act as charge relay system; for autoendoproteolytic cleavage activity in the active site. The active-site Schiff-base intermediate with substrate; via pyruvic acid; for decarboxylase activity is the Ser-244. A Pyruvic acid (Ser); by autocatalysis modification is found at Ser-244.

The protein belongs to the phosphatidylserine decarboxylase family. PSD-B subfamily. Prokaryotic type I sub-subfamily. Heterodimer of a large membrane-associated beta subunit and a small pyruvoyl-containing alpha subunit. The cofactor is pyruvate. Post-translationally, is synthesized initially as an inactive proenzyme. Formation of the active enzyme involves a self-maturation process in which the active site pyruvoyl group is generated from an internal serine residue via an autocatalytic post-translational modification. Two non-identical subunits are generated from the proenzyme in this reaction, and the pyruvate is formed at the N-terminus of the alpha chain, which is derived from the carboxyl end of the proenzyme. The autoendoproteolytic cleavage occurs by a canonical serine protease mechanism, in which the side chain hydroxyl group of the serine supplies its oxygen atom to form the C-terminus of the beta chain, while the remainder of the serine residue undergoes an oxidative deamination to produce ammonia and the pyruvoyl prosthetic group on the alpha chain. During this reaction, the Ser that is part of the protease active site of the proenzyme becomes the pyruvoyl prosthetic group, which constitutes an essential element of the active site of the mature decarboxylase.

It is found in the cell membrane. It carries out the reaction a 1,2-diacyl-sn-glycero-3-phospho-L-serine + H(+) = a 1,2-diacyl-sn-glycero-3-phosphoethanolamine + CO2. It participates in phospholipid metabolism; phosphatidylethanolamine biosynthesis; phosphatidylethanolamine from CDP-diacylglycerol: step 2/2. In terms of biological role, catalyzes the formation of phosphatidylethanolamine (PtdEtn) from phosphatidylserine (PtdSer). The protein is Phosphatidylserine decarboxylase proenzyme of Coxiella burnetii (strain CbuG_Q212) (Coxiella burnetii (strain Q212)).